We begin with the raw amino-acid sequence, 1128 residues long: GTPase-activating protein BEM3 (1128 aa).

A disordered region spans residues Ser-194–Pro-241. Residues Ala-209–Pro-230 are compositionally biased toward polar residues. Ser-254 carries the phosphoserine modification. Disordered stretches follow at residues Glu-345–Ser-391 and Pro-418–Ala-486. Pro residues predominate over residues Leu-366–Phe-375. Composition is skewed to polar residues over residues Gly-382–Ser-391 and Leu-420–Leu-478. In terms of domain architecture, PH spans Asp-634 to Asp-741. Disordered stretches follow at residues Leu-746–Ile-777 and Asn-796–Arg-838. A compositionally biased stretch (polar residues) spans Arg-752–Ser-764. Residues Asn-796–Asn-815 are compositionally biased toward low complexity. A compositionally biased stretch (polar residues) spans Pro-816–Asn-829. The Rho-GAP domain maps to Leu-913–Val-1128.

The protein localises to the cytoplasm. Functionally, GTPase-activating protein (GAP) for CDC42 and less efficiently for RHO1. Negative regulator of the pheromone-response pathway through the STE20 protein kinase. The polypeptide is GTPase-activating protein BEM3 (BEM3) (Saccharomyces cerevisiae (strain ATCC 204508 / S288c) (Baker's yeast)).